Consider the following 838-residue polypeptide: Leucine--tRNA ligase (838 aa).

Residues 36–46 carry the 'HIGH' region motif; it reads PYPSGKIHMGH. The 'KMSKS' region motif lies at 611–615; it reads KMSKS. Lysine 614 contacts ATP.

It belongs to the class-I aminoacyl-tRNA synthetase family.

It localises to the cytoplasm. It carries out the reaction tRNA(Leu) + L-leucine + ATP = L-leucyl-tRNA(Leu) + AMP + diphosphate. The protein is Leucine--tRNA ligase of Wolbachia pipientis wMel.